Reading from the N-terminus, the 122-residue chain is uncharacterized protein (122 aa).

3 helical membrane passes run 33-53 (ALGL…LTIP), 58-78 (VLGV…LLRW), and 97-117 (PGYL…LVVA).

This sequence to E.coli YidH.

The protein localises to the cell membrane. This is an uncharacterized protein from Mycobacterium tuberculosis (strain CDC 1551 / Oshkosh).